The following is a 1174-amino-acid chain: K(+) efflux antiporter 2, chloroplastic (1174 aa).

A chloroplast-targeting transit peptide spans Met1–Arg57. At Ser58–Glu565 the chain is on the stromal side. A disordered region spans residues Gly119–Pro141. Residues Ser142–Phe350 adopt a coiled-coil conformation. At Lys170 the chain carries N6-acetyllysine; by NSI. A compositionally biased stretch (basic and acidic residues) spans Glu420–Ser448. Residues Glu420 to Leu457 form a disordered region. The chain crosses the membrane as a helical span at residues Glu566 to Phe586. The Chloroplast intermembrane segment spans residues Gln587–Gly592. Residues Ser593 to Ile613 form a helical membrane-spanning segment. Residues Arg614 to Lys620 are Stromal-facing. A helical transmembrane segment spans residues Ala621–Glu641. Over Arg642–Lys648 the chain is Chloroplast intermembrane. The chain crosses the membrane as a helical span at residues Tyr649–Thr669. Residues His670–Pro678 lie on the Stromal side of the membrane. A helical transmembrane segment spans residues Ala679–Leu699. Residues Gln700–Thr713 lie on the Chloroplast intermembrane side of the membrane. A helical membrane pass occupies residues Phe714 to Ile734. The Stromal segment spans residues Ser735 to Gln746. The chain crosses the membrane as a helical span at residues Ala747–Ile767. Topologically, residues Ala768–Arg807 are chloroplast intermembrane. The chain crosses the membrane as a helical span at residues Ala808 to Phe828. The Stromal portion of the chain corresponds to Ser829–Gly841. The chain crosses the membrane as a helical span at residues Leu842–Ala862. Over Asn863–Pro865 the chain is Chloroplast intermembrane. Residues Leu866–Gly886 form a helical membrane-spanning segment. The Stromal segment spans residues Lys887–Arg898. A helical transmembrane segment spans residues Val899–Asn919. The Chloroplast intermembrane portion of the chain corresponds to Gln920–Ser928. The chain crosses the membrane as a helical span at residues Ser929–Gly949. Topologically, residues Gln950–Ile1174 are stromal. In terms of domain architecture, RCK N-terminal spans Gln975–Pro1092. Residues Ser1141–Ile1174 form a disordered region.

It belongs to the monovalent cation:proton antiporter 2 (CPA2) transporter (TC 2.A.37) family. KEA (TC 2.A.37.1) subfamily. In terms of processing, acetylated at Lys-170 by the stromal acetyltransferase enzyme NSI. As to expression, detected in leaves, stems and flowers. Expressed in shoots and roots. Mainly localized to leaf veins, hypocotyls, mesophylls and guard cells. Accumulates at high levels in small and dividing plastids (at protein level).

It localises to the plastid. Its subcellular location is the chloroplast inner membrane. The protein resides in the plastid inner membrane. The enzyme catalyses K(+)(in) + H(+)(out) = K(+)(out) + H(+)(in). Its activity is regulated as follows. Repressed by sodium ions Na(+). In terms of biological role, electroneutral K(+)/H(+) efflux antiporter modulating monovalent cation and pH homeostasis in plastids, especially during plastid division and thylakoid membrane formation. Transports K(+) and Cs(+) preferentially relative to Na(+) or Li(+). May function in osmotic adjustment. Collaboratively with KEA1, adjusts alkaline stromal pH upon light to dark transitions in plastids. Together with KEA1, critical for chloroplast development, including chloroplast RNA-metabolism (e.g. rRNA maturation, polysome loading and RNA-protein interactions) and plastid gene expression (PGE), ion homeostasis, and photosynthesis. Contributes, during early seedling development, to the regulation of photosynthesis and abscisic acid- (ABA-) mediated primary root growth in a sucrose-dependent manner. Involved in the regulation of reactive oxygen and nitrogen species (ROS and RNS) metabolism. Required in roots for rapid hyperosmotic-induced Ca(2+) responses and for osmo-sensory potentiation in hyperosmotic conditions. May counteract resilience to drought and salt stress, involving photorespiratory pathway and stomata closure. The protein is K(+) efflux antiporter 2, chloroplastic of Arabidopsis thaliana (Mouse-ear cress).